The sequence spans 140 residues: Large ribosomal subunit protein uL16 (140 aa).

This sequence belongs to the universal ribosomal protein uL16 family. In terms of assembly, part of the 50S ribosomal subunit.

Functionally, binds 23S rRNA and is also seen to make contacts with the A and possibly P site tRNAs. The sequence is that of Large ribosomal subunit protein uL16 from Phytoplasma australiense.